Consider the following 139-residue polypeptide: Actin-depolymerizing factor (139 aa).

Residues 5-139 enclose the ADF-H domain; the sequence is SSGMAVDDEC…SMDIIKARAF (135 aa).

The protein belongs to the actin-binding proteins ADF family. Preferentially in mature anther.

Actin-depolymerizing protein. Severs actin filaments (F-actin) and binds to actin monomers. This chain is Actin-depolymerizing factor, found in Lilium longiflorum (Trumpet lily).